Here is a 340-residue protein sequence, read N- to C-terminus: Probable dual-specificity RNA methyltransferase RlmN (340 aa).

Catalysis depends on glutamate 91, which acts as the Proton acceptor. A Radical SAM core domain is found at 97 to 326; that stretch reads HSGRVTACIS…CEIRKEKGTD (230 aa). A disulfide bond links cysteine 104 and cysteine 331. [4Fe-4S] cluster-binding residues include cysteine 111, cysteine 115, and cysteine 118. Residues 158–159, serine 190, 213–215, and asparagine 289 contribute to the S-adenosyl-L-methionine site; these read GE and SLH. Cysteine 331 (S-methylcysteine intermediate) is an active-site residue.

It belongs to the radical SAM superfamily. RlmN family. It depends on [4Fe-4S] cluster as a cofactor.

The protein resides in the cytoplasm. The catalysed reaction is adenosine(2503) in 23S rRNA + 2 reduced [2Fe-2S]-[ferredoxin] + 2 S-adenosyl-L-methionine = 2-methyladenosine(2503) in 23S rRNA + 5'-deoxyadenosine + L-methionine + 2 oxidized [2Fe-2S]-[ferredoxin] + S-adenosyl-L-homocysteine. It carries out the reaction adenosine(37) in tRNA + 2 reduced [2Fe-2S]-[ferredoxin] + 2 S-adenosyl-L-methionine = 2-methyladenosine(37) in tRNA + 5'-deoxyadenosine + L-methionine + 2 oxidized [2Fe-2S]-[ferredoxin] + S-adenosyl-L-homocysteine. In terms of biological role, specifically methylates position 2 of adenine 2503 in 23S rRNA and position 2 of adenine 37 in tRNAs. The chain is Probable dual-specificity RNA methyltransferase RlmN from Thermosipho melanesiensis (strain DSM 12029 / CIP 104789 / BI429).